We begin with the raw amino-acid sequence, 226 residues long: Endonuclease NucS (226 aa).

It belongs to the NucS endonuclease family.

The protein resides in the cytoplasm. Its function is as follows. Cleaves both 3' and 5' ssDNA extremities of branched DNA structures. The polypeptide is Endonuclease NucS (Mycobacterium tuberculosis (strain CDC 1551 / Oshkosh)).